Reading from the N-terminus, the 353-residue chain is Photosystem II D2 protein (353 aa).

At Thr-2 the chain carries N-acetylthreonine. Phosphothreonine is present on Thr-2. Residues Cys-41 to Thr-61 traverse the membrane as a helical segment. Residue His-118 participates in chlorophyll a binding. Residues Gly-125–Pro-141 traverse the membrane as a helical segment. Residues Gln-130 and Asn-143 each coordinate pheophytin a. Residues Val-153 to Ser-166 form a helical membrane-spanning segment. His-198 contacts chlorophyll a. A helical transmembrane segment spans residues Ala-208–Asp-228. His-215 and Phe-262 together coordinate a plastoquinone. His-215 lines the Fe cation pocket. His-269 lines the Fe cation pocket. The helical transmembrane segment at Gly-279–Arg-295 threads the bilayer.

This sequence belongs to the reaction center PufL/M/PsbA/D family. In terms of assembly, PSII is composed of 1 copy each of membrane proteins PsbA, PsbB, PsbC, PsbD, PsbE, PsbF, PsbH, PsbI, PsbJ, PsbK, PsbL, PsbM, PsbT, PsbX, PsbY, PsbZ, Psb30/Ycf12, at least 3 peripheral proteins of the oxygen-evolving complex and a large number of cofactors. It forms dimeric complexes. The D1/D2 heterodimer binds P680, chlorophylls that are the primary electron donor of PSII, and subsequent electron acceptors. It shares a non-heme iron and each subunit binds pheophytin, quinone, additional chlorophylls, carotenoids and lipids. There is also a Cl(-1) ion associated with D1 and D2, which is required for oxygen evolution. The PSII complex binds additional chlorophylls, carotenoids and specific lipids. serves as cofactor.

The protein localises to the plastid. It is found in the chloroplast thylakoid membrane. It carries out the reaction 2 a plastoquinone + 4 hnu + 2 H2O = 2 a plastoquinol + O2. Photosystem II (PSII) is a light-driven water:plastoquinone oxidoreductase that uses light energy to abstract electrons from H(2)O, generating O(2) and a proton gradient subsequently used for ATP formation. It consists of a core antenna complex that captures photons, and an electron transfer chain that converts photonic excitation into a charge separation. The D1/D2 (PsbA/PsbD) reaction center heterodimer binds P680, the primary electron donor of PSII as well as several subsequent electron acceptors. D2 is needed for assembly of a stable PSII complex. This is Photosystem II D2 protein from Panax ginseng (Korean ginseng).